The following is a 432-amino-acid chain: Glutamate-1-semialdehyde 2,1-aminomutase (432 aa).

Residue Lys-271 is modified to N6-(pyridoxal phosphate)lysine.

It belongs to the class-III pyridoxal-phosphate-dependent aminotransferase family. HemL subfamily. As to quaternary structure, homodimer. It depends on pyridoxal 5'-phosphate as a cofactor.

Its subcellular location is the cytoplasm. The catalysed reaction is (S)-4-amino-5-oxopentanoate = 5-aminolevulinate. Its pathway is porphyrin-containing compound metabolism; protoporphyrin-IX biosynthesis; 5-aminolevulinate from L-glutamyl-tRNA(Glu): step 2/2. It participates in porphyrin-containing compound metabolism; chlorophyll biosynthesis. The protein is Glutamate-1-semialdehyde 2,1-aminomutase of Prochlorococcus marinus (strain MIT 9211).